A 189-amino-acid chain; its full sequence is Large ribosomal subunit protein bL9 (189 aa).

This sequence belongs to the bacterial ribosomal protein bL9 family.

Its function is as follows. Binds to the 23S rRNA. This is Large ribosomal subunit protein bL9 from Cereibacter sphaeroides (strain KD131 / KCTC 12085) (Rhodobacter sphaeroides).